The sequence spans 293 residues: Protein BOBBER 2 (293 aa).

Position 2 is an N-acetylalanine (A2). Residues 50–80 (EKEIVAAVMAAKQRLREAEKKKLEKESVKSM) adopt a coiled-coil conformation. Composition is skewed to basic and acidic residues over residues 67-102 (AEKK…KEES) and 110-120 (EIEKPKEEKES). The disordered stretch occupies residues 67–125 (AEKKKLEKESVKSMEVEKPKKDSLKPTELEKPKEESLMATDPMEIEKPKEEKESGPIVP). One can recognise a CS domain in the interval 131-220 (LDFEKYSWGQ…DQMEWWKYCV (90 aa)).

It localises to the cytoplasm. Its subcellular location is the cytoplasmic granule. In terms of biological role, small heat shock protein required for the establishment of auxin gradients and for patterning of the apical domain of the embryo. Involved in the specification of the cotyledon primordia. Also required for normal inflorescence and floral meristem function, normal developmental patterning and thermotolerance. Acts as a molecular chaperone. The chain is Protein BOBBER 2 (BOB2) from Arabidopsis thaliana (Mouse-ear cress).